We begin with the raw amino-acid sequence, 351 residues long: MSTVVRIPRSVSWKGDAIAVLNQTKLPHSTEYKTLTTIEEVWKSIVMLEVRGAPAIGIVAAFGLALASKKYTTLHIEEFQKKFNRDCNYLGTSRPTAVNLFWAIDRMRESIQEITTIKEAQKILEEEALRIQQEDEAVCRSIGEHALTCFKDGDNILTICNAGSIATARYGTALAPFYIGKEKGVRLHAYACETRPVLQGGRLTTWELKQAGIDVTLITDNTAAHAIQTKEISAIIVGADRIVANGDTANKIGTMNLAILAKYFDIPFYVAAPLSTFDITKQTGAEIVIEERDETEVTKIFGKQVAPVGTTVYNPAFDVTPNELITGIITEKGIIRGDYKREIASLFKKTS.

Residues 51–53, Arg-94, and Gln-199 contribute to the substrate site; that span reads RGA. Catalysis depends on Asp-240, which acts as the Proton donor. Residue 250–251 coordinates substrate; the sequence is NK.

The protein belongs to the EIF-2B alpha/beta/delta subunits family. MtnA subfamily. In terms of assembly, homodimer.

The catalysed reaction is 5-(methylsulfanyl)-alpha-D-ribose 1-phosphate = 5-(methylsulfanyl)-D-ribulose 1-phosphate. The protein operates within amino-acid biosynthesis; L-methionine biosynthesis via salvage pathway; L-methionine from S-methyl-5-thio-alpha-D-ribose 1-phosphate: step 1/6. In terms of biological role, catalyzes the interconversion of methylthioribose-1-phosphate (MTR-1-P) into methylthioribulose-1-phosphate (MTRu-1-P). The sequence is that of Methylthioribose-1-phosphate isomerase from Bacillus anthracis.